Reading from the N-terminus, the 180-residue chain is Inner membrane-spanning protein YciB (180 aa).

5 consecutive transmembrane segments (helical) span residues 25-45, 49-69, 76-96, 118-138, and 150-170; these read QNATLYMLITSIICITLCYII, VSKLSIISSTVLFISGIITLI, IKIKPTILYVIFGIIFLMSGI, IILSYRTAAFFFFMAVVNEVV, and FKVFGVIPITFIFILLQLPLL.

Belongs to the YciB family.

Its subcellular location is the cell inner membrane. In terms of biological role, plays a role in cell envelope biogenesis, maintenance of cell envelope integrity and membrane homeostasis. This chain is Inner membrane-spanning protein YciB, found in Rickettsia prowazekii (strain Madrid E).